A 156-amino-acid chain; its full sequence is Cell division protein SepF (156 aa).

Positions asparagine 30 to lysine 49 are disordered.

It belongs to the SepF family. Homodimer. Interacts with FtsZ.

It is found in the cytoplasm. Its function is as follows. Cell division protein that is part of the divisome complex and is recruited early to the Z-ring. Probably stimulates Z-ring formation, perhaps through the cross-linking of FtsZ protofilaments. Its function overlaps with FtsA. This chain is Cell division protein SepF, found in Exiguobacterium sp. (strain ATCC BAA-1283 / AT1b).